We begin with the raw amino-acid sequence, 135 residues long: Histone H2B.4 (135 aa).

2 stretches are compositionally biased toward basic and acidic residues: residues 1-12 (MAPKAAEKKPVE) and 23-35 (EKKV…GGEK). Positions 1–43 (MAPKAAEKKPVEKTPAVKKPKAEKKVPTSKEGGEKKGKKKSKK) are disordered. Lys-8 and Lys-24 each carry N6-acetyllysine. Residue Lys-131 forms a Glycyl lysine isopeptide (Lys-Gly) (interchain with G-Cter in ubiquitin) linkage.

Belongs to the histone H2B family. In terms of assembly, the nucleosome is a histone octamer containing two molecules each of H2A, H2B, H3 and H4 assembled in one H3-H4 heterotetramer and two H2A-H2B heterodimers. The octamer wraps approximately 147 bp of DNA. Can be acetylated to form H2BK6ac and H2BK33ac. Post-translationally, monoubiquitinated to form H2BK143ub1; may give a specific tag for epigenetic transcriptional activation. As to expression, expressed preferentially in meristematic tissues.

It localises to the nucleus. It is found in the chromosome. Its function is as follows. Core component of nucleosome. Nucleosomes wrap and compact DNA into chromatin, limiting DNA accessibility to the cellular machineries which require DNA as a template. Histones thereby play a central role in transcription regulation, DNA repair, DNA replication and chromosomal stability. DNA accessibility is regulated via a complex set of post-translational modifications of histones, also called histone code, and nucleosome remodeling. In Triticum aestivum (Wheat), this protein is Histone H2B.4 (TH153).